The primary structure comprises 271 residues: Ribosomal RNA small subunit methyltransferase A (271 aa).

The S-adenosyl-L-methionine site is built by Asn19, Leu21, Gly46, Glu67, Asp92, and Asn114.

The protein belongs to the class I-like SAM-binding methyltransferase superfamily. rRNA adenine N(6)-methyltransferase family. RsmA subfamily.

The protein localises to the cytoplasm. It carries out the reaction adenosine(1518)/adenosine(1519) in 16S rRNA + 4 S-adenosyl-L-methionine = N(6)-dimethyladenosine(1518)/N(6)-dimethyladenosine(1519) in 16S rRNA + 4 S-adenosyl-L-homocysteine + 4 H(+). Functionally, specifically dimethylates two adjacent adenosines (A1518 and A1519) in the loop of a conserved hairpin near the 3'-end of 16S rRNA in the 30S particle. May play a critical role in biogenesis of 30S subunits. In Aeromonas hydrophila subsp. hydrophila (strain ATCC 7966 / DSM 30187 / BCRC 13018 / CCUG 14551 / JCM 1027 / KCTC 2358 / NCIMB 9240 / NCTC 8049), this protein is Ribosomal RNA small subunit methyltransferase A.